The chain runs to 181 residues: Der GTPase-activating protein YihI (181 aa).

2 disordered regions span residues 1 to 75 and 145 to 181; these read MSRK…KKIP and EPEA…DYKG. Residues 32 to 43 are compositionally biased toward basic residues; that stretch reads RLRKKDKKRKGL. Residues 146-155 show a composition bias toward acidic residues; that stretch reads PEAEEEFEEE. A compositionally biased stretch (basic and acidic residues) spans 156–165; sequence APVRKSRSDD. Residues 166-181 are compositionally biased toward acidic residues; that stretch reads DLLADFEDFDMDDYKG.

The protein belongs to the YihI family. As to quaternary structure, interacts with Der.

A GTPase-activating protein (GAP) that modifies Der/EngA GTPase function. May play a role in ribosome biogenesis. In Vibrio vulnificus (strain CMCP6), this protein is Der GTPase-activating protein YihI.